The following is a 109-amino-acid chain: UPF0122 protein ABC2295 (109 aa).

This sequence belongs to the UPF0122 family.

Functionally, might take part in the signal recognition particle (SRP) pathway. This is inferred from the conservation of its genetic proximity to ftsY/ffh. May be a regulatory protein. The sequence is that of UPF0122 protein ABC2295 from Shouchella clausii (strain KSM-K16) (Alkalihalobacillus clausii).